A 154-amino-acid chain; its full sequence is MLKQVEIFTDGSCLGNPGPGGYGAILRYRQHEKALSAGYRLTTNNRMELMAAIVALETLTSACQVALFSDSQYVRQGITQWIHGWKRRDWKTADKKPVKNVDLWQRLDQAIGPHQVEWIWIKGHAGHPENERCDELARRAAGTPTQDDSGYTPG.

Residues 1 to 142 (MLKQVEIFTD…CDELARRAAG (142 aa)) form the RNase H type-1 domain. Mg(2+) contacts are provided by D10, E48, D70, and D134.

The protein belongs to the RNase H family. Monomer. The cofactor is Mg(2+).

It localises to the cytoplasm. The enzyme catalyses Endonucleolytic cleavage to 5'-phosphomonoester.. In terms of biological role, endonuclease that specifically degrades the RNA of RNA-DNA hybrids. This chain is Ribonuclease H, found in Edwardsiella ictaluri (strain 93-146).